The following is a 2193-amino-acid chain: Genome polyprotein (2193 aa).

The disordered stretch occupies residues 1–22 (MGSQVSTQRSGSHENSNSATEG). A lipid anchor (N-myristoyl glycine; by host) is attached at G2. Residues 2–1503 (GSQVSTQRSG…HLNRAVLVMQ (1502 aa)) lie on the Cytoplasmic side of the membrane. 2 amphipathic alpha-helix regions span residues 566 to 588 (GDRV…LTQA) and 568 to 588 (RVAD…LTQA). Catalysis depends on for protease 2A activity residues H883 and D901. C918 and C920 together coordinate Zn(2+). C972 (for protease 2A activity) is an active-site residue. Residues C978 and H980 each contribute to the Zn(2+) site. The tract at residues 1112–1184 (SASWLKKFND…EQSAASQEDL (73 aa)) is membrane-binding. Positions 1112-1250 (SASWLKKFND…SPGTGKSLAT (139 aa)) are oligomerization. Residues 1133–1137 (SNKIS) are RNA-binding. One can recognise an SF3 helicase domain in the interval 1216–1374 (EKRMNNYMQF…YKTDLGRLDA (159 aa)). Residue 1240–1247 (GSPGTGKS) participates in ATP binding. 4 residues coordinate Zn(2+): C1381, C1392, S1393, and C1397. Residues 1381 to 1397 (CSENNTANFKRCSPLVC) form a C4-type; degenerate zinc finger. The segment at 1424–1431 (EYSNRSAI) is RNA-binding. The segment at 1435–1440 (IEALFQ) is oligomerization. An intramembrane segment occupies 1504 to 1519 (SIATVVAVVSLVYVIY). Over 1520–2193 (KLFAGFQGAY…NLRRNWLELF (674 aa)) the chain is Cytoplasmic. Y1529 bears the O-(5'-phospho-RNA)-tyrosine mark. The region spanning 1549 to 1727 (GPSLDFALSL…FCAGLKRSYF (179 aa)) is the Peptidase C3 domain. Residues H1588, E1619, and C1695 each act as for protease 3C activity in the active site. The region spanning 1958 to 2073 (GSLFAFDYSG…ASYPFPIDCL (116 aa)) is the RdRp catalytic domain. Residues D1964 and D2060 each contribute to the Mg(2+) site.

The protein belongs to the picornaviruses polyprotein family. In terms of assembly, interacts with capsid protein VP1 and capsid protein VP3 to form heterotrimeric protomers. Interacts with capsid protein VP0, and capsid protein VP3 to form heterotrimeric protomers. Five protomers subsequently associate to form pentamers which serve as building blocks for the capsid. Interacts with capsid protein VP2, capsid protein VP3 and capsid protein VP4 following cleavage of capsid protein VP0. Interacts with host SCARB2. Interacts with host ARF6; this interaction mediates viral endocytosis. As to quaternary structure, interacts with capsid protein VP1 and capsid protein VP3 in the mature capsid. Interacts with host SCARB2. In terms of assembly, interacts with capsid protein VP0 and capsid protein VP1 to form heterotrimeric protomers. Five protomers subsequently associate to form pentamers which serve as building blocks for the capsid. Interacts with capsid protein VP4 in the mature capsid. Interacts with protein 2C; this interaction may be important for virion morphogenesis. Interacts with capsid protein VP1 and capsid protein VP3. As to quaternary structure, homodimer. In terms of assembly, interacts with host BAX; this interaction activates the mitochondrial apoptotic pathway. Interacts with host ILF2. Homohexamer; forms a hexameric ring structure with 6-fold symmetry characteristic of AAA+ ATPases. Interacts (via N-terminus) with host RTN3 (via reticulon domain); this interaction is important for viral replication. Interacts with capsid protein VP3; this interaction may be important for virion morphogenesis. As to quaternary structure, interacts with protein 3CD. In terms of assembly, homodimer. Interacts with host GBF1. Interacts (via GOLD domain) with host ACBD3 (via GOLD domain); this interaction allows the formation of a viral protein 3A/ACBD3 heterotetramer with a 2:2 stoichiometry, which will stimulate the recruitment of host PI4KB in order to synthesize PI4P at the viral RNA replication sites. Interacts with RNA-directed RNA polymerase. As to quaternary structure, interacts with host IFIH1/MDA5; this interaction inhibits host IFIH1. Interacts with host RIGI. In terms of assembly, interacts with protein 3AB and with RNA-directed RNA polymerase. Interacts with Viral protein genome-linked and with protein 3CD. Mg(2+) serves as cofactor. Post-translationally, specific enzymatic cleavages in vivo by the viral proteases yield processing intermediates and the mature proteins. Myristoylation is required for the formation of pentamers during virus assembly. Further assembly of 12 pentamers and a molecule of genomic RNA generates the provirion. In terms of processing, during virion maturation, immature virions are rendered infectious following cleavage of VP0 into VP4 and VP2. This maturation seems to be an autocatalytic event triggered by the presence of RNA in the capsid and it is followed by a conformational change infectious virion. Post-translationally, myristoylation is required during RNA encapsidation and formation of the mature virus particle. VPg is uridylylated by the polymerase into VPg-pUpU. This acts as a nucleotide-peptide primer for the genomic RNA replication.

It localises to the virion. The protein localises to the host cytoplasm. Its subcellular location is the host cytoplasmic vesicle membrane. The protein resides in the host nucleus. It catalyses the reaction a ribonucleoside 5'-triphosphate + H2O = a ribonucleoside 5'-diphosphate + phosphate + H(+). It carries out the reaction Selective cleavage of Tyr-|-Gly bond in the picornavirus polyprotein.. The catalysed reaction is RNA(n) + a ribonucleoside 5'-triphosphate = RNA(n+1) + diphosphate. The enzyme catalyses Selective cleavage of Gln-|-Gly bond in the poliovirus polyprotein. In other picornavirus reactions Glu may be substituted for Gln, and Ser or Thr for Gly.. Its activity is regulated as follows. Replication or transcription is subject to high level of random mutations by the nucleotide analog ribavirin. In terms of biological role, forms an icosahedral capsid of pseudo T=3 symmetry with capsid proteins VP2 and VP3. The capsid is 300 Angstroms in diameter, composed of 60 copies of each capsid protein and enclosing the viral positive strand RNA genome. Capsid protein VP1 mainly forms the vertices of the capsid. Capsid protein VP1, together with VP2, interacts with host cell receptor SCARB2 to provide virion attachment to target host cells. This attachment induces virion internalization. This attachment induces virion internalization. After binding to its receptor, the capsid undergoes conformational changes. Capsid protein VP1 N-terminus (that contains an amphipathic alpha-helix) and capsid protein VP4 are externalized. Together, they shape a pore in the host membrane through which viral genome is translocated to host cell cytoplasm. Forms an icosahedral capsid of pseudo T=3 symmetry with capsid proteins VP2 and VP3. The capsid is 300 Angstroms in diameter, composed of 60 copies of each capsid protein and enclosing the viral positive strand RNA genome. Capsid protein VP2, together with VP1, interacts with host cell receptor SCARB2 to provide virion attachment to target host cells. Its function is as follows. Forms an icosahedral capsid of pseudo T=3 symmetry with capsid proteins VP2 and VP3. The capsid is 300 Angstroms in diameter, composed of 60 copies of each capsid protein and enclosing the viral positive strand RNA genome. Functionally, lies on the inner surface of the capsid shell. After binding to the host receptor, the capsid undergoes conformational changes. Capsid protein VP4 is released, Capsid protein VP1 N-terminus is externalized, and together, they shape a pore in the host membrane through which the viral genome is translocated into the host cell cytoplasm. In terms of biological role, component of immature procapsids, which is cleaved into capsid proteins VP4 and VP2 after maturation. Allows the capsid to remain inactive before the maturation step. Cysteine protease that cleaves viral polyprotein and specific host proteins. It is responsible for the autocatalytic cleavage between the P1 and P2 regions, which is the first cleavage occurring in the polyprotein. Also cleaves the host translation initiation factor EIF4G1, in order to shut down the capped cellular mRNA translation. Inhibits the host nucleus-cytoplasm protein and RNA trafficking by cleaving host members of the nuclear pores. Counteracts stress granule formation probably by antagonizing its assembly or promoting its dissassembly. Cleaves and inhibits host IFIH1/MDA5, thereby inhibiting the type-I IFN production and the establishment of the antiviral state. Cleaves and inhibits host MAVS, thereby inhibiting the type-I IFN production and the establishment of the antiviral state. Its function is as follows. Plays an essential role in the virus replication cycle by acting as a viroporin. Creates a pore in the host endoplasmic reticulum and as a consequence releases Ca2+ in the cytoplasm of infected cell. In turn, high levels of cytoplasmic calcium may trigger membrane trafficking and transport of viral ER-associated proteins to viroplasms, sites of viral genome replication. Also activates the mitochondrial apoptotic pathway by activating host BAX. Functionally, induces and associates with structural rearrangements of intracellular membranes. Displays RNA-binding, nucleotide binding and NTPase activities. May play a role in virion morphogenesis and viral RNA encapsidation by interacting with the capsid protein VP3. In terms of biological role, localizes the viral replication complex to the surface of membranous vesicles. Together with protein 3CD binds the Cis-Active RNA Element (CRE) which is involved in RNA synthesis initiation. Acts as a cofactor to stimulate the activity of 3D polymerase, maybe through a nucleid acid chaperone activity. Localizes the viral replication complex to the surface of membranous vesicles. It inhibits host cell endoplasmic reticulum-to-Golgi apparatus transport and causes the disassembly of the Golgi complex, possibly through GBF1 interaction. This would result in depletion of MHC, trail receptors and IFN receptors at the host cell surface. Plays an essential role in viral RNA replication by recruiting ACBD3 and PI4KB at the viral replication sites, thereby allowing the formation of the rearranged membranous structures where viral replication takes place. Its function is as follows. Acts as a primer for viral RNA replication and remains covalently bound to viral genomic RNA. VPg is uridylylated prior to priming replication into VPg-pUpU. The oriI viral genomic sequence may act as a template for this. The VPg-pUpU is then used as primer on the genomic RNA poly(A) by the RNA-dependent RNA polymerase to replicate the viral genome. During genome replication, the VPg-RNA linkage is removed by the host TDP2, thereby accelerating replication. During the late stage of the replication cycle, host TDP2 is excluded from sites of viral RNA synthesis and encapsidation, allowing for the generation of progeny virions. Functionally, involved in the viral replication complex and viral polypeptide maturation. It exhibits protease activity with a specificity and catalytic efficiency that is different from protease 3C. Protein 3CD lacks polymerase activity. Protein 3CD binds to the 5'UTR of the viral genome. In terms of biological role, major viral protease that mediates proteolytic processing of the polyprotein. Cleaves host EIF5B, contributing to host translation shutoff. Also cleaves host PABPC1, contributing to host translation shutoff. Disassembles host cytoplasmic stress granules by cleaving host G3BP1, although this effect is less prononced than the inhibition induced by protease 2A. Cleaves host RIGI and thus contributes to the inhibition of type I interferon production. Cleaves host IRF7 and thus contributes to the inhibition of type I interferon production. Cleaves host HNRNPA1 thereby increasing the translation of apoptosis protease activating factor APAF1, leading to apoptosis of the host cell. Cleaves host NLRP1, triggers host N-glycine-mediated degradation of the autoinhibitory NLRP1 N-terminal fragment. Replicates the viral genomic RNA on the surface of intracellular membranes. May form linear arrays of subunits that propagate along a strong head-to-tail interaction called interface-I. Covalently attaches UMP to a tyrosine of VPg, which is used to prime RNA synthesis. The positive stranded RNA genome is first replicated at virus induced membranous vesicles, creating a dsRNA genomic replication form. This dsRNA is then used as template to synthesize positive stranded RNA genomes. ss(+)RNA genomes are either translated, replicated or encapsidated. This chain is Genome polyprotein, found in Homo sapiens (Human).